Reading from the N-terminus, the 250-residue chain is Sugar fermentation stimulation protein homolog (250 aa).

It belongs to the SfsA family.

The chain is Sugar fermentation stimulation protein homolog from Trichodesmium erythraeum (strain IMS101).